Here is a 143-residue protein sequence, read N- to C-terminus: Nucleoside diphosphate kinase (143 aa).

Residues lysine 11, phenylalanine 59, arginine 87, threonine 93, arginine 104, and asparagine 114 each contribute to the ATP site. Residue histidine 117 is the Pros-phosphohistidine intermediate of the active site.

This sequence belongs to the NDK family. Homotetramer. Requires Mg(2+) as cofactor.

The protein localises to the cytoplasm. The enzyme catalyses a 2'-deoxyribonucleoside 5'-diphosphate + ATP = a 2'-deoxyribonucleoside 5'-triphosphate + ADP. It carries out the reaction a ribonucleoside 5'-diphosphate + ATP = a ribonucleoside 5'-triphosphate + ADP. Functionally, major role in the synthesis of nucleoside triphosphates other than ATP. The ATP gamma phosphate is transferred to the NDP beta phosphate via a ping-pong mechanism, using a phosphorylated active-site intermediate. In Shewanella sediminis (strain HAW-EB3), this protein is Nucleoside diphosphate kinase.